The chain runs to 377 residues: MPGDYYQTLGVTRDADKDEIKRAYRRLARKYHPDVNKEPGAEEKFKEINRAYEVLSEPEIRQRYDQFGEAGVSGGGAQGFDVGNMGDFADIFETIFGGFGGGMGGQQRGRRRANGPTRGDDLRLDLQLTFQEAIFGGEKEIRIPHLESCQVCEGTGAKPGTGVKTCGTCNGAGQVRRATRTPFGSFAQVSACPTCNGSGEVIEQKCEACNGVGRKQETKKLKITIPAGVDDGTRLRVGKEGDAGLRGGPAGDLYVFLMVETDKHFVREGMNIRSNLEVSYLQAILGCRLEVDTVDGKAELTIPAGTQPNTVLTLENKGVPKLGNATIRGDHLITVKVQIPTRINSEERELLERLATIKGESHGKGGLEGFLGGLFHK.

Residues 4-68 (DYYQTLGVTR…EIRQRYDQFG (65 aa)) form the J domain. The segment at 136–218 (GGEKEIRIPH…CNGVGRKQET (83 aa)) adopts a CR-type zinc-finger fold. Zn(2+) is bound by residues C149, C152, C166, C169, C192, C195, C206, and C209. CXXCXGXG motif repeat units follow at residues 149-156 (CQVCEGTG), 166-173 (CGTCNGAG), 192-199 (CPTCNGSG), and 206-213 (CEACNGVG).

The protein belongs to the DnaJ family. As to quaternary structure, homodimer. Zn(2+) serves as cofactor.

The protein localises to the cytoplasm. Its function is as follows. Participates actively in the response to hyperosmotic and heat shock by preventing the aggregation of stress-denatured proteins and by disaggregating proteins, also in an autonomous, DnaK-independent fashion. Unfolded proteins bind initially to DnaJ; upon interaction with the DnaJ-bound protein, DnaK hydrolyzes its bound ATP, resulting in the formation of a stable complex. GrpE releases ADP from DnaK; ATP binding to DnaK triggers the release of the substrate protein, thus completing the reaction cycle. Several rounds of ATP-dependent interactions between DnaJ, DnaK and GrpE are required for fully efficient folding. Also involved, together with DnaK and GrpE, in the DNA replication of plasmids through activation of initiation proteins. In Synechocystis sp. (strain ATCC 27184 / PCC 6803 / Kazusa), this protein is Chaperone protein DnaJ 1.